The sequence spans 271 residues: DNA repair protein RecO (271 aa).

The segment at 248–271 (AVGVEDSVRQDGDRDSTTRTPSSA) is disordered. A compositionally biased stretch (basic and acidic residues) spans 253–264 (DSVRQDGDRDST).

The protein belongs to the RecO family.

In terms of biological role, involved in DNA repair and RecF pathway recombination. The sequence is that of DNA repair protein RecO from Rhodococcus opacus (strain B4).